The sequence spans 444 residues: E1B 55 kDa protein (444 aa).

Residues 1–35 are disordered; that stretch reads MEQNADMEPDRQVNQRPPRFRARGAGVRGRGRVRR. 2 positions are modified to phosphoserine: S438 and S439.

It belongs to the adenoviridae E1B 55 kDa protein family. As to quaternary structure, interacts with host PML-4 and PML-5; this interaction promotes efficient subnuclear targeting of E1B-55K to PML nuclear bodies. Interacts with E4-ORF3 protein. Interacts with E4-ORF6 protein.

The protein localises to the host nucleus. It localises to the host cytoplasm. Its function is as follows. Plays a major role to prevent cellular inhibition of viral genome replication. Assembles an SCF-like E3 ubiquitin ligase complex based on the cellular proteins ELOB, ELOC, CUL5 and RBX1, in cooperation with viral E4orf6. This viral RING-type ligase ubiquitinates cellular substrates and targets them to proteasomal degradation: TP53/p53, LIG4, MRE11-RAD50-NBS1 (MRN) complex, ITGA3, DAXX and BLM. E1B-55K probably acts as the substrate-specific adapter of the SCF-like E3 ubiquitin ligase complex. Degradation of host TP53/p53 activity is essential for preventing E1A-induced TP53 accumulation that would otherwise lead to cell apoptosis and growth arrest. E1B-55K also inactivates TP53 transcription-factor activity by binding its transactivation domain. E1B-55K also functions as a SUMO1 E3 ligase for TP53 which causes the latter to be sequestered in promyelocytic leukemia (PML) nuclear bodies thereby contributing to maximal inhibition of TP53 function. The sequence is that of E1B 55 kDa protein from Canis lupus familiaris (Dog).